The following is a 157-amino-acid chain: 17.6 kDa class I heat shock protein 3 (157 aa).

Positions aspartate 43 to glycine 157 constitute a sHSP domain.

The protein belongs to the small heat shock protein (HSP20) family. In terms of assembly, may form oligomeric structures.

The protein resides in the cytoplasm. The sequence is that of 17.6 kDa class I heat shock protein 3 (HSP17.6C) from Arabidopsis thaliana (Mouse-ear cress).